The primary structure comprises 96 residues: Putative pterin-4-alpha-carbinolamine dehydratase (96 aa).

It belongs to the pterin-4-alpha-carbinolamine dehydratase family.

It catalyses the reaction (4aS,6R)-4a-hydroxy-L-erythro-5,6,7,8-tetrahydrobiopterin = (6R)-L-erythro-6,7-dihydrobiopterin + H2O. The protein is Putative pterin-4-alpha-carbinolamine dehydratase of Metallosphaera sedula (strain ATCC 51363 / DSM 5348 / JCM 9185 / NBRC 15509 / TH2).